The chain runs to 563 residues: Serine palmitoyltransferase 3 (563 aa).

Positions 1 to 29 are enriched in polar residues; it reads MANLNDSAVTNGTLHNPKTQQGKRQSTGC. The tract at residues 1 to 32 is disordered; that stretch reads MANLNDSAVTNGTLHNPKTQQGKRQSTGCVKN. Residues 59–79 traverse the membrane as a helical segment; sequence PLYVYVLTYMGYGIGILFGYL. N6-(pyridoxal phosphate)lysine is present on lysine 371.

Belongs to the class-II pyridoxal-phosphate-dependent aminotransferase family. As to quaternary structure, component of the serine palmitoyltransferase (SPT) complex, which is composed of SPTLC1, SPTLC2 or SPTLC3 and SPTSSA or SPTSSB. The heterodimer consisting of SPTLC1 and SPTLC2/SPTLC3 forms the catalytic core of the enzyme, while SPTSSA or SPTSSB subunits determine substrate specificity. SPT also interacts with ORMDL proteins, especially ORMDL3, which negatively regulate SPT activity in the presence of ceramides. Pyridoxal 5'-phosphate is required as a cofactor. Expressed in white and brown adipose tissues.

Its subcellular location is the endoplasmic reticulum membrane. It carries out the reaction L-serine + hexadecanoyl-CoA + H(+) = 3-oxosphinganine + CO2 + CoA. It catalyses the reaction dodecanoyl-CoA + L-serine + H(+) = 3-oxotetradecasphinganine + CO2 + CoA. The catalysed reaction is tetradecanoyl-CoA + L-serine + H(+) = 3-oxohexadecasphinganine + CO2 + CoA. The enzyme catalyses octadecanoyl-CoA + L-serine + H(+) = 3-oxoeicosasphinganine + CO2 + CoA. It functions in the pathway lipid metabolism; sphingolipid metabolism. SPT complex catalytic activity is negatively regulated by ORMDL proteins, including ORMDL3, in the presence of ceramides. This mechanism allows to maintain ceramide levels at sufficient concentrations for the production of complex sphingolipids, but which prevents the accumulation of ceramides to levels that trigger apoptosis. In terms of biological role, component of the serine palmitoyltransferase multisubunit enzyme (SPT) that catalyzes the initial and rate-limiting step in sphingolipid biosynthesis by condensing L-serine and activated acyl-CoA (most commonly palmitoyl-CoA) to form long-chain bases. The SPT complex is composed of SPTLC1, SPTLC2 or SPTLC3 and SPTSSA or SPTSSB. Within this complex, the heterodimer consisting of SPTLC1 and SPTLC2/SPTLC3 forms the catalytic core. The composition of the serine palmitoyltransferase (SPT) complex determines the substrate preference. The SPTLC1-SPTLC2-SPTSSA complex shows a strong preference for C16-CoA substrate, while the SPTLC1-SPTLC3-SPTSSA isozyme uses both C14-CoA and C16-CoA as substrates, with a slight preference for C14-CoA. The SPTLC1-SPTLC2-SPTSSB complex shows a strong preference for C18-CoA substrate, while the SPTLC1-SPTLC3-SPTSSB isozyme displays an ability to use a broader range of acyl-CoAs, without apparent preference. The sequence is that of Serine palmitoyltransferase 3 from Mus musculus (Mouse).